Reading from the N-terminus, the 485-residue chain is Probable trichothecene esterase SAT6 (485 aa).

Residues M1 to V23 form a disordered region. A compositionally biased stretch (low complexity) spans L9–V23. Residues S262, D406, and H438 each act as charge relay system in the active site.

The protein belongs to the AB hydrolase superfamily. Lipase family.

It participates in mycotoxin biosynthesis. Functionally, probable trichothecene esterase; part of the satratoxin SC1 cluster involved in the biosynthesis of satratoxins, trichothecene mycotoxins that are associated with human food poisonings. Satratoxins are suggested to be made by products of multiple gene clusters (SC1, SC2 and SC3) that encode 21 proteins in all, including polyketide synthases, acetyltransferases, and other enzymes expected to modify the trichothecene skeleton. SC1 encodes 10 proteins, SAT1 to SAT10. The largest are SAT8, which encodes a putative polyketide synthase (PKS) with a conventional non-reducing architecture, and SAT10, a putative protein containing four ankyrin repeats and thus may be involved in protein scaffolding. The putative short-chain reductase SAT3 may assist the PKS in some capacity. SAT6 contains a secretory lipase domain and acts probably as a trichothecene esterase. SAT5 encodes a putative acetyltransferase, and so, with SAT6, may affect endogenous protection from toxicity. The probable transcription factor SAT9 may regulate the expression of the SC1 cluster. SC2 encodes proteins SAT11 to SAT16, the largest of which encodes the putative reducing PKS SAT13. SAT11 is a cytochrome P450 monooxygenase, while SAT14 and SAT16 are probable acetyltransferases. The SC2 cluster may be regulated by the transcription factor SAT15. SC3 is a small cluster that encodes 5 proteins, SAT17 to SAT21. SAT21 is a putative MFS-type transporter which may have a role in exporting secondary metabolites. The four other proteins putatively encoded in SC3 include the taurine hydroxylase-like protein SAT17, the O-methyltransferase SAT18, the acetyltransferase SAT19, and the Cys6-type zinc finger SAT20, the latter being probably involved in regulation of SC3 expression. This is Probable trichothecene esterase SAT6 from Stachybotrys chartarum (strain CBS 109288 / IBT 7711) (Toxic black mold).